Consider the following 997-residue polypeptide: Protein Smaug (997 aa).

Residues 1 to 37 are compositionally biased toward polar residues; the sequence is MKYATGTDNAMTSGISGQTNNSNSASTEMQPTTSTPT. Disordered stretches follow at residues 1-69 and 329-370; these read MKYA…QSQP and LCPA…GSSS. Composition is skewed to low complexity over residues 44–69 and 329–338; these read TPTATTTATYANGNPNPNANPSQSQP and LCPASGSRSS. A phosphoserine mark is found at serine 564 and serine 575. Residues 583–763 are interaction with cup; the sequence is EFKPNYIKFH…KDLKFKLSKM (181 aa). Residues 600–654 form the SAM domain; sequence GIGLWLKSLRLHKYIELFKNMTYEEMLLITEDFLQSVGVTKGASHKLALCIEKLK. 2 disordered regions span residues 773 to 892 and 944 to 972; these read HVKP…MQQM and GSSDNLGLERNQQPQQQQRKLSGGVTSAE. Polar residues-rich tracts occupy residues 802-822 and 854-864; these read NGSNDRINNRKNSNDMLNFSL and HQPQYKSSSYP. Phosphoserine is present on serine 970.

This sequence belongs to the SMAUG family. Interacts with oskar (osk). Binds to the 3'-UTR of nos. Interacts with cup, which in turn recruits eIF4-E, leading to an indirect interaction between smg and eIF4-E that prevents mRNA translation.

The protein localises to the cytoplasm. Functionally, translation regulator that binds to the 3'-UTR of specific mRNAs such as nanos (nos) and prevent their translation. Prevents translation of unlocalized nos in the bulk cytoplasm via the recruitment of cup. This chain is Protein Smaug, found in Drosophila erecta (Fruit fly).